The following is a 157-amino-acid chain: Small ribosomal subunit protein uS7 (157 aa).

It belongs to the universal ribosomal protein uS7 family. As to quaternary structure, part of the 30S ribosomal subunit. Contacts proteins S9 and S11.

In terms of biological role, one of the primary rRNA binding proteins, it binds directly to 16S rRNA where it nucleates assembly of the head domain of the 30S subunit. Is located at the subunit interface close to the decoding center, probably blocks exit of the E-site tRNA. In Caulobacter vibrioides (strain ATCC 19089 / CIP 103742 / CB 15) (Caulobacter crescentus), this protein is Small ribosomal subunit protein uS7.